The following is a 657-amino-acid chain: Knob-associated histidine-rich protein (657 aa).

The signal sequence occupies residues 1–34; it reads MKSFKNKNTLRRKKAFPVFTKILLVSFLVWVLKC. Asn42 carries an N-linked (GlcNAc...) asparagine glycan. Residues 57–76 are compositionally biased toward basic residues; the sequence is AQKQHEHHHHHHHHHHHQHQ. 3 disordered regions span residues 57–138, 282–301, and 352–657; these read AQKQ…PSNE, AHDG…SEGY, and VNKY…GCCG. Residues 99-108 show a composition bias toward low complexity; sequence PQVHQQVHGQ. A compositionally biased stretch (basic residues) spans 112–123; sequence HHHHHHHHHHLH. Basic and acidic residues-rich tracts occupy residues 357-378 and 399-408; these read KHGD…EGEK and KDNEDAESVK. A compositionally biased stretch (basic residues) spans 409–425; it reads SKKHKSHDCEKKKSKKH. Over residues 426–435 the composition is skewed to basic and acidic residues; sequence KDNEDAESVK. Over residues 453-468 the composition is skewed to basic residues; it reads AAKKLTKKIKIKKKTN. Residues 473 to 496 show a composition bias toward basic and acidic residues; it reads DGSKAHEKKENETKNTAGENKKVD. The segment covering 497-508 has biased composition (polar residues); the sequence is STSADNKSTNAA. 2 stretches are compositionally biased toward basic and acidic residues: residues 512–523 and 551–578; these read AKDKTQGGKTDK and STSK…EATK. Positions 590–614 are enriched in low complexity; sequence ASTTEGATKGASTTAGSTTGATTGA. The segment covering 628 to 643 has biased composition (polar residues); it reads AANNGEQVMSRGQAQL. Residues 648–657 are compositionally biased toward basic residues; sequence KKKKKRGCCG.

It is found in the secreted. KAHRP might mimick human histidine-rich glycoproteins to anchor host thrombospondin or a parasite analog in a binding complex with the endothelial cell receptor. The polypeptide is Knob-associated histidine-rich protein (SD17) (Plasmodium falciparum (isolate NF7 / Ghana)).